The following is a 3232-amino-acid chain: D-lysergyl-peptide-synthetase subunit 1 (3232 aa).

An adenylation (A) domain 1 region spans residues 90–474 (GCLTYDEMSI…LGRKDDQVKI (385 aa)). The Carrier 1 domain maps to 617 to 686 (REKLLQGCFA…TLREIVIVST (70 aa)). S649 carries the O-(pantetheine 4'-phosphoryl)serine modification. The interval 731 to 1122 (EDIYPCTHLQ…EHILTQIHSN (392 aa)) is condensation (C) domain 1. The tract at residues 1165-1572 (QAKCQAQPDA…RRKDAQVKIR (408 aa)) is adenylation (A) domain 2. In terms of domain architecture, Carrier 2 spans 1717-1785 (TEHEISAIWA…TIRKLALARG (69 aa)). O-(pantetheine 4'-phosphoryl)serine is present on S1749. A condensation (C) domain 2 region spans residues 1835–2252 (ERIYPCSPIQ…ALPVLDEDQM (418 aa)). An adenylation (A) domain 3 region spans residues 2276-2675 (QQCLRCPDSP…GRNDDQVKVR (400 aa)). Residues 2810–2878 (MEAELQRLVG…RVSDLARIVE (69 aa)) enclose the Carrier 3 domain. An O-(pantetheine 4'-phosphoryl)serine modification is found at S2842. The segment at 2943 to 3218 (LYFSKPVASE…LLHWLHQQHI (276 aa)) is cyclization (Cyc) domain.

The protein belongs to the NRP synthetase family.

It participates in alkaloid biosynthesis; ergot alkaloid biosynthesis. D-lysergyl-peptide-synthetase subunit 1; part of the gene cluster that mediates the biosynthesis of fungal ergot alkaloid. DmaW catalyzes the first step of ergot alkaloid biosynthesis by condensing dimethylallyl diphosphate (DMAP) and tryptophan to form 4-dimethylallyl-L-tryptophan. The second step is catalyzed by the methyltransferase easF that methylates 4-dimethylallyl-L-tryptophan in the presence of S-adenosyl-L-methionine, resulting in the formation of 4-dimethylallyl-L-abrine. The catalase easC and the FAD-dependent oxidoreductase easE then transform 4-dimethylallyl-L-abrine to chanoclavine-I which is further oxidized by easD in the presence of NAD(+), resulting in the formation of chanoclavine-I aldehyde. Agroclavine dehydrogenase easG then mediates the conversion of chanoclavine-I aldehyde to agroclavine via a non-enzymatic adduct reaction: the substrate is an iminium intermediate that is formed spontaneously from chanoclavine-I aldehyde in the presence of glutathione. The presence of easA is not required to complete this reaction. Further conversion of agroclavine to paspalic acid is a two-step process involving oxidation of agroclavine to elymoclavine and of elymoclavine to paspalic acid, the second step being performed by the elymoclavine oxidase cloA. Paspalic acid is then further converted to D-lysergic acid. Ergopeptines are assembled from D-lysergic acid and three different amino acids by the D-lysergyl-peptide-synthetases composed each of a monomudular and a trimodular nonribosomal peptide synthetase subunit. LpsB and lpsC encode the monomodular subunits responsible for D-lysergic acid activation and incorporation into the ergopeptine backbone. LpsA1 and A2 subunits encode the trimodular nonribosomal peptide synthetase assembling the tripeptide portion of ergopeptines. LpsA1 is responsible for formation of the major ergopeptine, ergotamine, and lpsA2 for alpha-ergocryptine, the minor ergopeptine of the total alkaloid mixture elaborated by C.purpurea. D-lysergyl-tripeptides are assembled by the nonribosomal peptide synthetases and released as N-(D-lysergyl-aminoacyl)-lactams. Cyclolization of the D-lysergyl-tripeptides is performed by the Fe(2+)/2-ketoglutarate-dependent dioxygenase easH which introduces a hydroxyl group into N-(D-lysergyl-aminoacyl)-lactam at alpha-C of the aminoacyl residue followed by spontaneous condensation with the terminal lactam carbonyl group. The sequence is that of D-lysergyl-peptide-synthetase subunit 1 from Claviceps purpurea (Ergot fungus).